The chain runs to 77 residues: Acyl carrier protein (77 aa).

The Carrier domain occupies 2–77 (SNIEERVKKI…AAIDYVSKNQ (76 aa)). O-(pantetheine 4'-phosphoryl)serine is present on S37.

The protein belongs to the acyl carrier protein (ACP) family. Post-translationally, 4'-phosphopantetheine is transferred from CoA to a specific serine of apo-ACP by AcpS. This modification is essential for activity because fatty acids are bound in thioester linkage to the sulfhydryl of the prosthetic group.

Its subcellular location is the cytoplasm. It participates in lipid metabolism; fatty acid biosynthesis. Functionally, carrier of the growing fatty acid chain in fatty acid biosynthesis. The chain is Acyl carrier protein from Shewanella oneidensis (strain ATCC 700550 / JCM 31522 / CIP 106686 / LMG 19005 / NCIMB 14063 / MR-1).